The following is a 390-amino-acid chain: Cystathionine beta-lyase MetC (390 aa).

An N6-(pyridoxal phosphate)lysine modification is found at Lys200.

It belongs to the trans-sulfuration enzymes family. In terms of assembly, homotetramer. Pyridoxal 5'-phosphate is required as a cofactor.

The protein resides in the cytoplasm. The enzyme catalyses L,L-cystathionine + H2O = L-homocysteine + pyruvate + NH4(+). It carries out the reaction an S-substituted L-cysteine + H2O = a thiol + pyruvate + NH4(+). It participates in amino-acid biosynthesis; L-methionine biosynthesis via de novo pathway; L-homocysteine from L-cystathionine: step 1/1. Catalyzes the transformation of cystathionine into homocysteine. Also exhibits cysteine desulfhydrase activity in vitro, producing sulfide from cysteine. This is Cystathionine beta-lyase MetC (metC) from Bacillus subtilis (strain 168).